Reading from the N-terminus, the 777-residue chain is Penicillin-binding protein 1B (777 aa).

Over Met1 to Gly30 the chain is Cytoplasmic. A helical; Signal-anchor for type II membrane protein membrane pass occupies residues Arg31–Ile52. Residues Tyr53–Trp777 lie on the Periplasmic side of the membrane. Residues Leu162–Glu334 are transglycosylase. Glu200 functions as the Proton donor; for transglycosylase activity in the catalytic mechanism. Residues Ser415–Gln709 are transpeptidase. Ser476 (acyl-ester intermediate; for transpeptidase activity) is an active-site residue.

The protein in the N-terminal section; belongs to the glycosyltransferase 51 family. This sequence in the C-terminal section; belongs to the transpeptidase family.

It localises to the cell inner membrane. It catalyses the reaction [GlcNAc-(1-&gt;4)-Mur2Ac(oyl-L-Ala-gamma-D-Glu-L-Lys-D-Ala-D-Ala)](n)-di-trans,octa-cis-undecaprenyl diphosphate + beta-D-GlcNAc-(1-&gt;4)-Mur2Ac(oyl-L-Ala-gamma-D-Glu-L-Lys-D-Ala-D-Ala)-di-trans,octa-cis-undecaprenyl diphosphate = [GlcNAc-(1-&gt;4)-Mur2Ac(oyl-L-Ala-gamma-D-Glu-L-Lys-D-Ala-D-Ala)](n+1)-di-trans,octa-cis-undecaprenyl diphosphate + di-trans,octa-cis-undecaprenyl diphosphate + H(+). The enzyme catalyses Preferential cleavage: (Ac)2-L-Lys-D-Ala-|-D-Ala. Also transpeptidation of peptidyl-alanyl moieties that are N-acyl substituents of D-alanine.. Its pathway is cell wall biogenesis; peptidoglycan biosynthesis. Its function is as follows. Cell wall formation. Synthesis of cross-linked peptidoglycan from the lipid intermediates. The enzyme has a penicillin-insensitive transglycosylase N-terminal domain (formation of linear glycan strands) and a penicillin-sensitive transpeptidase C-terminal domain (cross-linking of the peptide subunits). In Vibrio cholerae serotype O1 (strain ATCC 39315 / El Tor Inaba N16961), this protein is Penicillin-binding protein 1B (mrcB).